A 221-amino-acid polypeptide reads, in one-letter code: 7-cyano-7-deazaguanine synthase (221 aa).

12 to 22 (FSGGQDSTTCL) lines the ATP pocket. Zn(2+)-binding residues include cysteine 190, cysteine 199, cysteine 202, and cysteine 205.

Belongs to the QueC family. In terms of assembly, homodimer. The cofactor is Zn(2+).

It carries out the reaction 7-carboxy-7-deazaguanine + NH4(+) + ATP = 7-cyano-7-deazaguanine + ADP + phosphate + H2O + H(+). It participates in purine metabolism; 7-cyano-7-deazaguanine biosynthesis. Its function is as follows. Catalyzes the ATP-dependent conversion of 7-carboxy-7-deazaguanine (CDG) to 7-cyano-7-deazaguanine (preQ(0)). This is 7-cyano-7-deazaguanine synthase from Clostridium novyi (strain NT).